The primary structure comprises 492 residues: MKQKCVLIITDGIGYNKNSKFNAFEAAKKPSYEKLFKEVPNSLLKTSGLAVGLPEGQMGNSEVGHMCIGSGRIIYQNLVRINKAIENKELEKNENLQKLLAKCKRVHIIGLYSDGGVHSMDTHFKAMLEICAKNGNEVFAHAITDGRDVSPKSGLNFIKDLKEFCENLGVHFATLCGRFYAMDRDKRWDRVKEYYECLLGKAYKVPNLLEYLQKSYDENVTDEFIKAAQNENYKGMREEDGIIFINFRNDRMKQLVEVLNSKDFKEFEREKIFENLLTMSVYDDKFKLPVLFEKEKIENTLAQVISKAGLSQLHTAETEKYAHVTFFFNGGKEELLENETRVLIPSPKVKTYDEKPQMSAFEVCDAVKKGIEKGEDFIVVNFANGDMVGHTGDFNAAIKAVEAVDTCLGEIVECAKKHDYAFIITSDHGNCEAMQDEKGNLLTNHTTFDVFVFVQAKGVSKIKDNMGLSNIAASVLKILDLEIPKEMNEALF.

Residues Asp-11 and Ser-61 each contribute to the Mn(2+) site. Ser-61 (phosphoserine intermediate) is an active-site residue. Residues His-118, 147 to 148 (RD), Arg-178, Arg-184, 248 to 251 (RNDR), and Lys-320 each bind substrate. Residues Asp-386, His-390, Asp-427, His-428, and His-445 each coordinate Mn(2+).

It belongs to the BPG-independent phosphoglycerate mutase family. In terms of assembly, monomer. It depends on Mn(2+) as a cofactor.

The catalysed reaction is (2R)-2-phosphoglycerate = (2R)-3-phosphoglycerate. It functions in the pathway carbohydrate degradation; glycolysis; pyruvate from D-glyceraldehyde 3-phosphate: step 3/5. Functionally, catalyzes the interconversion of 2-phosphoglycerate and 3-phosphoglycerate. The sequence is that of 2,3-bisphosphoglycerate-independent phosphoglycerate mutase from Campylobacter jejuni subsp. jejuni serotype O:6 (strain 81116 / NCTC 11828).